The primary structure comprises 228 residues: Urease accessory protein UreF (228 aa).

The protein belongs to the UreF family. UreD, UreF and UreG form a complex that acts as a GTP-hydrolysis-dependent molecular chaperone, activating the urease apoprotein by helping to assemble the nickel containing metallocenter of UreC. The UreE protein probably delivers the nickel.

The protein localises to the cytoplasm. Its function is as follows. Required for maturation of urease via the functional incorporation of the urease nickel metallocenter. The chain is Urease accessory protein UreF from Dechloromonas aromatica (strain RCB).